The chain runs to 863 residues: Glycogen phosphorylase (863 aa).

K618 bears the N6-(pyridoxal phosphate)lysine mark.

Belongs to the glycogen phosphorylase family. The cofactor is pyridoxal 5'-phosphate.

The enzyme catalyses [(1-&gt;4)-alpha-D-glucosyl](n) + phosphate = [(1-&gt;4)-alpha-D-glucosyl](n-1) + alpha-D-glucose 1-phosphate. Its function is as follows. Phosphorylase is an important allosteric enzyme in carbohydrate metabolism. Enzymes from different sources differ in their regulatory mechanisms and in their natural substrates. However, all known phosphorylases share catalytic and structural properties. The chain is Glycogen phosphorylase (glgP) from Mycobacterium tuberculosis (strain ATCC 25618 / H37Rv).